An 82-amino-acid chain; its full sequence is Small ribosomal subunit protein bS18 (82 aa).

The tract at residues 1–25 (MADTSSSQARRPFHRRRKTCPFSGA) is disordered.

This sequence belongs to the bacterial ribosomal protein bS18 family. In terms of assembly, part of the 30S ribosomal subunit. Forms a tight heterodimer with protein bS6.

Binds as a heterodimer with protein bS6 to the central domain of the 16S rRNA, where it helps stabilize the platform of the 30S subunit. The chain is Small ribosomal subunit protein bS18 from Agrobacterium fabrum (strain C58 / ATCC 33970) (Agrobacterium tumefaciens (strain C58)).